The following is a 192-amino-acid chain: Phosphoheptose isomerase (192 aa).

The 156-residue stretch at 37–192 (LADSFKGGGK…IQLIEKEMVK (156 aa)) folds into the SIS domain. 52-54 (NGG) lines the substrate pocket. 2 residues coordinate Zn(2+): histidine 61 and glutamate 65. Residues glutamate 65, 93-94 (ND), 119-121 (STS), serine 124, and glutamine 172 each bind substrate. Glutamine 172 and histidine 180 together coordinate Zn(2+).

It belongs to the SIS family. GmhA subfamily. As to quaternary structure, homotetramer. Zn(2+) is required as a cofactor.

It is found in the cytoplasm. The enzyme catalyses 2 D-sedoheptulose 7-phosphate = D-glycero-alpha-D-manno-heptose 7-phosphate + D-glycero-beta-D-manno-heptose 7-phosphate. The protein operates within carbohydrate biosynthesis; D-glycero-D-manno-heptose 7-phosphate biosynthesis; D-glycero-alpha-D-manno-heptose 7-phosphate and D-glycero-beta-D-manno-heptose 7-phosphate from sedoheptulose 7-phosphate: step 1/1. Functionally, catalyzes the isomerization of sedoheptulose 7-phosphate in D-glycero-D-manno-heptose 7-phosphate. The polypeptide is Phosphoheptose isomerase (Escherichia coli O7:K1 (strain IAI39 / ExPEC)).